We begin with the raw amino-acid sequence, 174 residues long: Crossover junction endodeoxyribonuclease RuvC (174 aa).

Active-site residues include D8, E69, and D141. The Mg(2+) site is built by D8, E69, and D141.

Belongs to the RuvC family. As to quaternary structure, homodimer which binds Holliday junction (HJ) DNA. The HJ becomes 2-fold symmetrical on binding to RuvC with unstacked arms; it has a different conformation from HJ DNA in complex with RuvA. In the full resolvosome a probable DNA-RuvA(4)-RuvB(12)-RuvC(2) complex forms which resolves the HJ. It depends on Mg(2+) as a cofactor.

The protein localises to the cytoplasm. The catalysed reaction is Endonucleolytic cleavage at a junction such as a reciprocal single-stranded crossover between two homologous DNA duplexes (Holliday junction).. Functionally, the RuvA-RuvB-RuvC complex processes Holliday junction (HJ) DNA during genetic recombination and DNA repair. Endonuclease that resolves HJ intermediates. Cleaves cruciform DNA by making single-stranded nicks across the HJ at symmetrical positions within the homologous arms, yielding a 5'-phosphate and a 3'-hydroxyl group; requires a central core of homology in the junction. The consensus cleavage sequence is 5'-(A/T)TT(C/G)-3'. Cleavage occurs on the 3'-side of the TT dinucleotide at the point of strand exchange. HJ branch migration catalyzed by RuvA-RuvB allows RuvC to scan DNA until it finds its consensus sequence, where it cleaves and resolves the cruciform DNA. This chain is Crossover junction endodeoxyribonuclease RuvC, found in Xanthomonas euvesicatoria pv. vesicatoria (strain 85-10) (Xanthomonas campestris pv. vesicatoria).